The following is a 572-amino-acid chain: Urease subunit alpha (572 aa).

The Urease domain occupies Gly132 to Tyr572. Ni(2+) contacts are provided by His137, His139, and Lys220. The residue at position 220 (Lys220) is an N6-carboxylysine. His222 serves as a coordination point for substrate. His249 and His275 together coordinate Ni(2+). Catalysis depends on His323, which acts as the Proton donor. A Ni(2+)-binding site is contributed by Asp363.

Belongs to the metallo-dependent hydrolases superfamily. Urease alpha subunit family. As to quaternary structure, heterotrimer of UreA (gamma), UreB (beta) and UreC (alpha) subunits. Three heterotrimers associate to form the active enzyme. Requires Ni cation as cofactor. Carboxylation allows a single lysine to coordinate two nickel ions.

It localises to the cytoplasm. It catalyses the reaction urea + 2 H2O + H(+) = hydrogencarbonate + 2 NH4(+). The protein operates within nitrogen metabolism; urea degradation; CO(2) and NH(3) from urea (urease route): step 1/1. The chain is Urease subunit alpha from Bradyrhizobium diazoefficiens (strain JCM 10833 / BCRC 13528 / IAM 13628 / NBRC 14792 / USDA 110).